Here is a 449-residue protein sequence, read N- to C-terminus: HSPB1-associated protein 1 homolog (449 aa).

The JmjC domain maps to 102 to 266 (WAYADYKYIA…DEARVAEALT (165 aa)). The span at 385-395 (DQDKLRSDNKL) shows a compositional bias: basic and acidic residues. The tract at residues 385 to 416 (DQDKLRSDNKLGQRSGQSVLQDTENPGGSGEM) is disordered. Positions 396 to 410 (GQRSGQSVLQDTENP) are enriched in polar residues.

It is found in the cytoplasm. May play a role in cellular stress response. In Danio rerio (Zebrafish), this protein is HSPB1-associated protein 1 homolog (hspbap1).